The following is a 468-amino-acid chain: MMYFVISAMKAQIEIIPCKICGDKSSGIHYGVITCEGCKGFFRRSQQSNAAYSCPRQKNCLIDRTSRNRCQHCRLQKCLAVGMSRDAVKFGRMSKKQRDSLYAEVQKHRLQQQQRDHQQQPGEAEPLTPTYGLSTNGLTELHDDLSGYMNGHTPDGTKPDSGVSSFYLDIQPSPDQSGLDINGIKPEPICDFTPGSGFFPYCSFTNGETSPTVSMAELEHLAQNISKSHMETCQYLREELQQMTWQAFLQEEVENYQSKPREVMWQLCAIKITEAIQYVVEFAKRIDGFMELCQNDQIVLLKAGSLEVVFVRMCRAFDPQNNTVYFDGKYAGPDVFKSLGCDDLISSVFEFGKNLCSMHLSEDEIALFSAFVLMSADRSWLQEKVKVEKLQQKIQLALQHVLQKNHREDGILTKLICKVSTLRALCSRHTEKLTAFKAIYPDIVRAHFPPLYKELFGSDFEQSMPVDG.

Positions 15-90 (IIPCKICGDK…VGMSRDAVKF (76 aa)) form a DNA-binding region, nuclear receptor. 2 consecutive NR C4-type zinc fingers follow at residues 18–38 (CKIC…CEGC) and 54–73 (CPRQ…CQHC). Disordered stretches follow at residues 101–129 (LYAE…PLTP) and 142–163 (HDDL…DSGV). One can recognise an NR LBD domain in the interval 217-455 (ELEHLAQNIS…AHFPPLYKEL (239 aa)). The tract at residues 444–455 (VRAHFPPLYKEL) is AF-2.

It belongs to the nuclear hormone receptor family. NR1 subfamily. In terms of tissue distribution, expressed in the brain, in cerebellar-like structures, including Purkinje cells.

Its subcellular location is the nucleus. Its function is as follows. Nuclear receptor that binds DNA as a monomer to ROR response elements (RORE). Required for proper cerebellum development. This is Nuclear receptor ROR-alpha A (roraa) from Danio rerio (Zebrafish).